A 359-amino-acid polypeptide reads, in one-letter code: MSQYDVEPLLSKAAILNKYADLPQNGKVMAEYIWIDGFNHLRSKTMTLDAKPSSIDQLRVWNFDGSSTGQAPGNNSDTLLKPVAMYNDPFRRGDNILVLAACYTADGSPNGFNHRDACAKLLEKHADKETWFGIEQEYTMLDYYDRPFGWPKGGFPGPQGPFYCGVGTGRVFARDIVEAHYKACLYAGINISGINAEVMPSQWEYQVGPCAGIEMGDQLWMSRFLLHRIAEDFGVKISFHPKPILGDWNGAGCHTNVSTKDTRAEGGIKAIESYLEKFAKRHKEHIAVYGDDNDLRLTGRHETGSIDKFTYGVADRGASVRIPRSVAMNGCGYFEDRRPASSIDPYLVTGIITETMFEH.

Residues 28 to 107 (VMAEYIWIDG…VLAACYTADG (80 aa)) form the GS beta-grasp domain. The region spanning 114–359 (HRDACAKLLE…GIITETMFEH (246 aa)) is the GS catalytic domain. Position 273 is a phosphoserine (serine 273). Threonine 303 carries the phosphothreonine modification. A Phosphoserine modification is found at serine 305.

It belongs to the glutamine synthetase family. In terms of assembly, homooctamer.

It is found in the cytoplasm. The enzyme catalyses L-glutamate + NH4(+) + ATP = L-glutamine + ADP + phosphate + H(+). This is Glutamine synthetase (gln1) from Schizosaccharomyces pombe (strain 972 / ATCC 24843) (Fission yeast).